Consider the following 284-residue polypeptide: D-tagatose-1,6-bisphosphate aldolase subunit GatY (284 aa).

The active-site Proton donor is the D82. The Zn(2+) site is built by H83 and H180. G181 contributes to the dihydroxyacetone phosphate binding site. H208 lines the Zn(2+) pocket. Residues 209 to 211 (GAS) and 230 to 233 (NVAT) each bind dihydroxyacetone phosphate.

The protein belongs to the class II fructose-bisphosphate aldolase family. TagBP aldolase GatY subfamily. As to quaternary structure, forms a complex with GatZ. Zn(2+) is required as a cofactor.

It carries out the reaction D-tagatofuranose 1,6-bisphosphate = D-glyceraldehyde 3-phosphate + dihydroxyacetone phosphate. It participates in carbohydrate metabolism; D-tagatose 6-phosphate degradation; D-glyceraldehyde 3-phosphate and glycerone phosphate from D-tagatose 6-phosphate: step 2/2. Its function is as follows. Catalytic subunit of the tagatose-1,6-bisphosphate aldolase GatYZ, which catalyzes the reversible aldol condensation of dihydroxyacetone phosphate (DHAP or glycerone-phosphate) with glyceraldehyde 3-phosphate (G3P) to produce tagatose 1,6-bisphosphate (TBP). Requires GatZ subunit for full activity and stability. Is involved in the catabolism of galactitol. This Escherichia coli (strain 55989 / EAEC) protein is D-tagatose-1,6-bisphosphate aldolase subunit GatY.